The following is a 660-amino-acid chain: Threonine--tRNA ligase (660 aa).

Positions 1 to 49 (MPDSIVHVKKGQRFLDVIKDKNVVAVKIDSVLHDLRDVAERDVDAIPVS) constitute a TGS domain. Residues 225–554 (DHRRIIAEMD…LLEHYAGKLP (330 aa)) are catalytic. Zn(2+)-binding residues include Cys-318, His-369, and His-531.

It belongs to the class-II aminoacyl-tRNA synthetase family. Homodimer. Requires Zn(2+) as cofactor.

The protein localises to the cytoplasm. It catalyses the reaction tRNA(Thr) + L-threonine + ATP = L-threonyl-tRNA(Thr) + AMP + diphosphate + H(+). Its function is as follows. Catalyzes the attachment of threonine to tRNA(Thr) in a two-step reaction: L-threonine is first activated by ATP to form Thr-AMP and then transferred to the acceptor end of tRNA(Thr). This is Threonine--tRNA ligase from Thermoplasma acidophilum (strain ATCC 25905 / DSM 1728 / JCM 9062 / NBRC 15155 / AMRC-C165).